Consider the following 444-residue polypeptide: Gamma-glutamyl phosphate reductase (444 aa).

The protein belongs to the gamma-glutamyl phosphate reductase family.

It localises to the cytoplasm. It carries out the reaction L-glutamate 5-semialdehyde + phosphate + NADP(+) = L-glutamyl 5-phosphate + NADPH + H(+). Its pathway is amino-acid biosynthesis; L-proline biosynthesis; L-glutamate 5-semialdehyde from L-glutamate: step 2/2. Catalyzes the NADPH-dependent reduction of L-glutamate 5-phosphate into L-glutamate 5-semialdehyde and phosphate. The product spontaneously undergoes cyclization to form 1-pyrroline-5-carboxylate. This is Gamma-glutamyl phosphate reductase from Albidiferax ferrireducens (strain ATCC BAA-621 / DSM 15236 / T118) (Rhodoferax ferrireducens).